We begin with the raw amino-acid sequence, 42 residues long: uncharacterized protein (42 aa).

Its subcellular location is the cytoplasm. This is an uncharacterized protein from Escherichia coli (strain K12).